The primary structure comprises 1057 residues: Adenylate-forming reductase stbB (1057 aa).

An adenylation (A) domain region spans residues 21 to 378; sequence STKRQPGAVC…FRLRTDMNFE (358 aa). AMP is bound by residues histidine 251, 344-345, threonine 349, and 423-426; these read NF and AVGR. One can recognise a Carrier domain in the interval 564–651; sequence ETLEEDIKAL…QMAAAIKNPS (88 aa). Serine 600 is modified (O-(pantetheine 4'-phosphoryl)serine). Residues 693 to 1025 form a reductase (R) domain region; that stretch reads IVVVTGSSGS…SGAVILGTDV (333 aa). Residues 700–703, 783–785, tyrosine 858, and lysine 862 contribute to the NADP(+) site; these read SGSL and AAW.

It belongs to the adenylate-forming reductase family.

It carries out the reaction ilicicolinate B + AH2 + ATP = ilicicolin B + A + AMP + diphosphate. The protein operates within secondary metabolite biosynthesis; terpenoid biosynthesis. Its function is as follows. Nonribosomal peptide synthase-like protein; part of the cluster that mediates the biosynthesis of LL-Z1272-beta, also known as ilicicolin B, a prenylated aryl-aldehyde produced by several fungi and that serves as a key pathway intermediate for many fungal meroterpenoids. The first step in the pathway is performed by the non-reducing polyketide synthase stbA that produces orsellinic acid by condensing acetyl-CoA with 3 malonyl-CoA units. The prenyltransferase stbC then prenylates orsenilic acid into grifolic acid. Finally, grifolic acid is reduced to ilicicolin B by the NRPS-like protein stbB. This chain is Adenylate-forming reductase stbB, found in Stachybotrys bisbyi (Hyalostachybotrys bisbyi).